Here is a 773-residue protein sequence, read N- to C-terminus: Angiomotin-like protein 2 (773 aa).

Disordered regions lie at residues 41–157 (GGAG…HVRS), 169–238 (RNGA…SPHF), and 259–309 (QYQY…LAQM). Basic and acidic residues-rich tracts occupy residues 80-91 (QGGETHLAENRL), 100-112 (KGEELPTYEEAKA), and 141-152 (RRQDEALRELRH). The tract at residues 101 to 302 (GEELPTYEEA…GPPGAQATSG (202 aa)) is required for interaction with CDH5. The residue at position 107 (tyrosine 107) is a Phosphotyrosine; by FGFR1. Polar residues predominate over residues 177–190 (HMSSSHSFPQLARS). Over residues 196–213 (PRGPPAEGPEPRGPPPQY) the composition is skewed to pro residues. Residues 220 to 302 (QETAAVNDPR…GPPGAQATSG (83 aa)) form a required for interaction with CDH1 region. The stretch at 304–577 (AHLAQMESVL…KYLEERAMRQ (274 aa)) forms a coiled coil. Glycyl lysine isopeptide (Lys-Gly) (interchain with G-Cter in ubiquitin) cross-links involve residues lysine 342 and lysine 403. 2 disordered regions span residues 589–611 (QRDTTLIRHSPQPSPSSSFNEGL) and 677–754 (WQGF…TTSL). Residues 701-710 (EEPPATPPLP) are compositionally biased toward pro residues. Residues 719–734 (DGSTQTDGPADSTSAC) show a composition bias toward polar residues. Phosphoserine occurs at positions 753 and 756. Positions 770 to 773 (EILI) match the PDZ-binding motif.

This sequence belongs to the angiomotin family. In terms of assembly, part of a complex composed of AMOTL2, MAGI1 and CDH5, within the complex AMOTL2 acts as a scaffold protein for the interaction of MAGI1 with CDH5. The complex is required for coupling actin fibers to cell junctions in endothelial cells. Within the complex AMOTL2 (via its N-terminus) interacts with CDH5. Interacts (via N-terminus) with MAGI1. Interacts (via N-terminus) with ACTB; the interaction facilitates binding of cell junction complexes to actin fibers in endothelial cells. Interacts with CDH1; the interaction may facilitate binding of radial actin fibers to cell junction complexes. Interacts with SRC. Interacts with YAP1; the interaction is required for ubiquitination of AMOTL2 and localization of YAP1 to tight junctions. Interacts with WWP1; the interaction facilitates WWP1 interaction with the Crumbs complex and subsequent WWP1 translocation to the plasma membrane. WWP1 interaction with the Crumbs complex promotes WWP1 monoubiquitination of AMOTL2 which subsequently activates the Hippo signaling pathway. When ubiquitinated interacts with LATS2 (via UBA domain); the interaction promotes LATS2 phosphorylation of YAP1. Interacts (via PPXY motif) with WWTR1/TAZ (via WW domain); the interaction promotes WWTR1/TAZ localization to the cytoplasm and thereby inhibition of its transcriptional properties. Interacts with PHLDB2; interaction may facilitate PHLDB2 localization to the myotube podosome cortex that surrounds the core. Monoubiquitinated at Lys-342 and Lys-403 by Crumbs complex-bound WWP1. De-ubiquitinated at Lys-342 and Lys-403 by USP9X; the interaction may be promoted by cell contact inhibition. Deubiquitination of AMOTL2 negatively regulates Hippo signaling activation. In terms of processing, phosphorylation at Tyr-107 is necessary for efficient binding to SRC and synergistically functioning with SRC to activate the downstream MAPK pathway.

The protein resides in the recycling endosome. Its subcellular location is the cytoplasm. It is found in the cell projection. The protein localises to the podosome. It localises to the cell junction. In terms of biological role, regulates the translocation of phosphorylated SRC to peripheral cell-matrix adhesion sites. Required for proper architecture of actin filaments. Plays a role in coupling actin fibers to cell junctions in endothelial cells and is therefore required for correct endothelial cell morphology via facilitating transcellular transmission of mechanical force resulting in endothelial cell elongation. Required for the anchoring of radial actin fibers to CDH1 junction complexes at the cell membrane which facilitates organization of radial actin fiber structure and cellular response to contractile forces. This contributes to maintenance of cell area, size, shape, epithelial sheet organization and trophectoderm cell properties that facilitate blastocyst zona hatching. Inhibits the Wnt/beta-catenin signaling pathway, probably by recruiting CTNNB1 to recycling endosomes and hence preventing its translocation to the nucleus. Participates in angiogenesis. Activates the Hippo signaling pathway in response to cell contact inhibition via interaction with and ubiquitination by Crumbs complex-bound WWP1. Ubiquitinated AMOTL2 then interacts with LATS2 which in turn phosphorylates YAP1, excluding it from the nucleus and localizing it to the cytoplasm and tight junctions, therefore ultimately repressing YAP1-driven transcription of target genes. Acts to inhibit WWTR1/TAZ transcriptional coactivator activity via sequestering WWTR1/TAZ in the cytoplasm and at tight junctions. Regulates the size and protein composition of the podosome cortex and core at myofibril neuromuscular junctions. Selectively promotes FGF-induced MAPK activation through SRC. May play a role in the polarity, proliferation and migration of endothelial cells. This Rattus norvegicus (Rat) protein is Angiomotin-like protein 2.